Consider the following 508-residue polypeptide: MEEIQRYLQLDRSQQHDFLYPLIFQEYIYAFAHDRGFGRSILSENPGYDKKSSLLIVKRLITRMYQQNHFIGSTNDSNQNPFLGRNKNLYYQIISEGFAFIVEIPFSLRLISSREGKNKKIVKSQNLRSIHSIFPFLEDNFSHLNFVLDILIPYPVHVEVLVQTLRYWVKDASSLHLVRFFLNEYCNWNSLILPKKASFSCSKINQRLFLFLYNSHVCEYESIFVFLRNQSSHLLSTSSGVLLERIYFYGKIECLVNVFVKVKDFQANLWLVKEPCMHYVRYQRKSILASKGTFLLIKKWKCYLMTFWQWHFLLWFQPRRIYINQLSNHFLEFLGYLSNVRMNPAVVRSQILENSFLMNNSIKKFDTLVPISPLIASLAKAKFCNVLGHPISKPVRADLSDSNIIDRFGHICRNLSHYHSGSFKKKSLYRIKYILRLSCARTLARKHKSTVRAFLKRLGSDLLEEFLMSEEDVLSLTFPKASSTLRGGYKSRIWYLDIIYINDLANYK.

The protein belongs to the intron maturase 2 family. MatK subfamily.

The protein localises to the plastid. It localises to the chloroplast. In terms of biological role, usually encoded in the trnK tRNA gene intron. Probably assists in splicing its own and other chloroplast group II introns. In Antirrhinum majus (Garden snapdragon), this protein is Maturase K.